We begin with the raw amino-acid sequence, 524 residues long: Alkaline phosphatase, tissue-nonspecific isozyme (524 aa).

The first 17 residues, 1–17, serve as a signal peptide directing secretion; the sequence is MISPFLVLAIGTCLTNS. Aspartate 60 is a binding site for Mg(2+). Zn(2+) contacts are provided by aspartate 60 and serine 110. The active-site Phosphoserine intermediate is the serine 110. A Phosphoserine modification is found at serine 110. Cysteines 139 and 201 form a disulfide. N-linked (GlcNAc...) asparagine glycosylation is present at asparagine 140. Threonine 173 serves as a coordination point for Mg(2+). Asparagine 230 is a glycosylation site (N-linked (GlcNAc...) asparagine). Glutamate 235 lines the Ca(2+) pocket. A glycan (N-linked (GlcNAc...) asparagine) is linked at asparagine 271. Ca(2+)-binding residues include phenylalanine 290 and glutamate 291. N-linked (GlcNAc...) asparagine glycosylation occurs at asparagine 303. Aspartate 306 serves as a coordination point for Ca(2+). Position 332 (glutamate 332) interacts with Mg(2+). Residues aspartate 337, histidine 341, aspartate 378, and histidine 379 each coordinate Zn(2+). Asparagine 430 carries N-linked (GlcNAc...) asparagine glycosylation. Position 454 (histidine 454) interacts with Zn(2+). The cysteines at positions 489 and 497 are disulfide-linked. Serine 501 carries the GPI-anchor amidated serine lipid modification. Residues 502–524 constitute a propeptide, removed in mature form; sequence SAGSLAAGPLLLALALYPLSVLF.

It belongs to the alkaline phosphatase family. Homodimer. Requires Mg(2+) as cofactor. Zn(2+) is required as a cofactor. Ca(2+) serves as cofactor. In terms of processing, N-glycosylated.

The protein localises to the cell membrane. Its subcellular location is the extracellular vesicle membrane. It is found in the mitochondrion membrane. It localises to the mitochondrion intermembrane space. The enzyme catalyses a phosphate monoester + H2O = an alcohol + phosphate. It catalyses the reaction diphosphate + H2O = 2 phosphate + H(+). The catalysed reaction is pyridoxal 5'-phosphate + H2O = pyridoxal + phosphate. It carries out the reaction phosphoethanolamine + H2O = ethanolamine + phosphate. The enzyme catalyses N-phosphocreatine + H2O = creatine + phosphate. It catalyses the reaction ATP + H2O = ADP + phosphate + H(+). The catalysed reaction is ADP + H2O = AMP + phosphate + H(+). It carries out the reaction AMP + H2O = adenosine + phosphate. With respect to regulation, phosphatase activity is specifically inhibited by 5-((5-chloro-2-methoxyphenyl)sulfonamido)nicotinamide (SBI-425). Its function is as follows. Alkaline phosphatase that metabolizes various phosphate compounds and plays a key role in skeletal mineralization and adaptive thermogenesis. Has broad substrate specificity and can hydrolyze a considerable variety of compounds: however, only a few substrates, such as diphosphate (inorganic pyrophosphate; PPi), pyridoxal 5'-phosphate (PLP) and N-phosphocreatine are natural substrates. Plays an essential role in skeletal and dental mineralization via its ability to hydrolyze extracellular diphosphate, a potent mineralization inhibitor, to phosphate: it thereby promotes hydroxyapatite crystal formation and increases inorganic phosphate concentration. Acts in a non-redundant manner with PHOSPHO1 in skeletal mineralization: while PHOSPHO1 mediates the initiation of hydroxyapatite crystallization in the matrix vesicles (MVs), ALPL/TNAP catalyzes the spread of hydroxyapatite crystallization in the extracellular matrix. Also promotes dephosphorylation of osteopontin (SSP1), an inhibitor of hydroxyapatite crystallization in its phosphorylated state; it is however unclear whether ALPL/TNAP mediates SSP1 dephosphorylation via a direct or indirect manner. Catalyzes dephosphorylation of PLP to pyridoxal (PL), the transportable form of vitamin B6, in order to provide a sufficient amount of PLP in the brain, an essential cofactor for enzymes catalyzing the synthesis of diverse neurotransmitters. Additionally, also able to mediate ATP degradation in a stepwise manner to adenosine, thereby regulating the availability of ligands for purinergic receptors. Also capable of dephosphorylating microbial products, such as lipopolysaccharides (LPS) as well as other phosphorylated small-molecules, such as poly-inosine:cytosine (poly I:C). Acts as a key regulator of adaptive thermogenesis as part of the futile creatine cycle: localizes to the mitochondria of thermogenic fat cells and acts by mediating hydrolysis of N-phosphocreatine to initiate a futile cycle of creatine dephosphorylation and phosphorylation. During the futile creatine cycle, creatine and N-phosphocreatine are in a futile cycle, which dissipates the high energy charge of N-phosphocreatine as heat without performing any mechanical or chemical work. The polypeptide is Alkaline phosphatase, tissue-nonspecific isozyme (Homo sapiens (Human)).